We begin with the raw amino-acid sequence, 873 residues long: Disks large homolog 1 (873 aa).

One can recognise an L27 domain in the interval 4 to 64 (RQKDAQRALQ…YYEVSLQDTE (61 aa)). Positions 62-135 (DTEDKPIEDS…SPHIPGDARP (74 aa)) are disordered. The segment covering 63–77 (TEDKPIEDSSLKSRE) has biased composition (basic and acidic residues). The span at 85-96 (WNLSVPPSTTGP) shows a compositional bias: polar residues. PDZ domains are found at residues 230 to 317 (EITL…RRRK) and 325 to 412 (DVKL…AKPT). Positions 441 to 456 (SYLSQPLTPATPSRYS) are enriched in polar residues. Residues 441 to 464 (SYLSQPLTPATPSRYSPVSKGMLG) form a disordered region. The PDZ 3 domain maps to 474–555 (KIVLHRGTTG…TVTIIAQYRP (82 aa)). Residues 636-662 (NKDSGEQDTSDVDQHVTSNASDSESSF) form a disordered region. Polar residues predominate over residues 650-662 (HVTSNASDSESSF). The 176-residue stretch at 683-858 (SRPVIILGPM…IYNQVKQIIE (176 aa)) folds into the Guanylate kinase-like domain.

Belongs to the MAGUK family.

It is found in the cell membrane. The protein localises to the endoplasmic reticulum membrane. It localises to the cell junction. Its subcellular location is the apical cell membrane. In terms of biological role, essential multidomain scaffolding protein required for normal development. Recruits channels, receptors and signaling molecules to discrete plasma membrane domains in polarized cells. Promotes epithelial cell layer barrier function via maintaining cell-cell adhesion. May play a role in adherens junction assembly, signal transduction and cell proliferation. May play a role in synapse assembly and function. The polypeptide is Disks large homolog 1 (dlg1) (Danio rerio (Zebrafish)).